A 287-amino-acid polypeptide reads, in one-letter code: Beta-lactamase GES-5 (287 aa).

An N-terminal signal peptide occupies residues 1-18; sequence MRFIHALLLAGIAHSAYA. The cysteines at positions 63 and 233 are disulfide-linked. The active-site Nucleophile; acyl-ester intermediate is Ser64. Imipenem is bound by residues Ser64, Ser125, Asn127, Thr230, Thr232, and Arg238.

Belongs to the class-A beta-lactamase family.

Its subcellular location is the secreted. It catalyses the reaction a beta-lactam + H2O = a substituted beta-amino acid. With respect to regulation, inhibited by the beta-lactamase-blocking agents clavulanic acid, sulbactam and tazobactam, via a covalent binding to Ser-64. In terms of biological role, confers resistance to penicillins, cephalosporins and carbapenems. Has carbapenem-hydrolyzing activity. The chain is Beta-lactamase GES-5 from Klebsiella pneumoniae.